The chain runs to 494 residues: UPF0371 protein SPG_0310 (494 aa).

This sequence belongs to the UPF0371 family.

The sequence is that of UPF0371 protein SPG_0310 from Streptococcus pneumoniae serotype 19F (strain G54).